Here is a 410-residue protein sequence, read N- to C-terminus: Probable protein S-acyltransferase 6 (410 aa).

Helical transmembrane passes span 45-65 and 76-96; these read LGLTISLIVAPVTIFCIFVAS and GVSIILVAVVFTIYDLILLML. Residues 108–129 form a disordered region; sequence NSHPPEPEVVDGNTGSGTSQTP. In terms of domain architecture, DHHC spans 147 to 197; that stretch reads KYCDTCMLYRPPRCSHCSICNNCVERFDHHCPWVGQCIAQRNYRFFFMFVF. C177 acts as the S-palmitoyl cysteine intermediate in catalysis. The next 2 membrane-spanning stretches (helical) occupy residues 191–211 and 235–255; these read FFFMFVFSTTLLCVYVFAFCC and SIALILYTFISTFFVGGLTCF. S325 bears the Phosphoserine mark.

Belongs to the DHHC palmitoyltransferase family.

The protein localises to the cell membrane. The enzyme catalyses L-cysteinyl-[protein] + hexadecanoyl-CoA = S-hexadecanoyl-L-cysteinyl-[protein] + CoA. Functionally, palmitoyl acyltransferase. In Arabidopsis thaliana (Mouse-ear cress), this protein is Probable protein S-acyltransferase 6 (PAT06).